Reading from the N-terminus, the 318-residue chain is 2-keto-3-deoxygluconate permease (318 aa).

10 helical membrane passes run 10–30, 42–62, 82–102, 109–129, 139–159, 163–183, 201–221, 224–244, 257–277, and 288–308; these read LPGG…TLWP, GLIS…GATI, IAVA…GGIP, LSVL…YAAL, AGAV…LILG, LATF…LGFA, TLVP…TIVH, ASGV…LLLA, VAAS…AGMA, and TALV…LTAL.

Belongs to the KdgT transporter family.

It is found in the cell inner membrane. The catalysed reaction is 2-dehydro-3-deoxy-D-gluconate(in) + H(+)(in) = 2-dehydro-3-deoxy-D-gluconate(out) + H(+)(out). In terms of biological role, catalyzes the proton-dependent uptake of 2-keto-3-deoxygluconate (KDG) into the cell. The chain is 2-keto-3-deoxygluconate permease from Xanthomonas oryzae pv. oryzae (strain MAFF 311018).